Consider the following 360-residue polypeptide: Phosphate acyltransferase (360 aa).

This sequence belongs to the PlsX family. As to quaternary structure, homodimer. Probably interacts with PlsY.

Its subcellular location is the cytoplasm. It catalyses the reaction a fatty acyl-[ACP] + phosphate = an acyl phosphate + holo-[ACP]. The protein operates within lipid metabolism; phospholipid metabolism. Catalyzes the reversible formation of acyl-phosphate (acyl-PO(4)) from acyl-[acyl-carrier-protein] (acyl-ACP). This enzyme utilizes acyl-ACP as fatty acyl donor, but not acyl-CoA. This chain is Phosphate acyltransferase, found in Thermobifida fusca (strain YX).